The chain runs to 293 residues: Short-chain dehydrogenase/reductase PhomF' (293 aa).

2 residues coordinate NADP(+): isoleucine 31 and asparagine 102. The active-site Proton donor is the serine 175. Tyrosine 190, lysine 194, and serine 225 together coordinate NADP(+). Catalysis depends on tyrosine 190, which acts as the Proton acceptor. Lysine 194 functions as the Lowers pKa of active site Tyr in the catalytic mechanism.

It belongs to the short-chain dehydrogenases/reductases (SDR) family.

Short-chain dehydrogenase/reductase; part of the gene cluster that mediates the biosynthesis of the phomopsins, a group of hexapeptide mycotoxins which infects lupins and causes lupinosis disease in livestock. The role of phomF' within the phomopsins biosynthesis pathway has still to be determined. The pathway starts with the processing of the precursor phomA by several endopeptidases including kexin proteases as well as the cluster-specific S41 family peptidase phomP1 and the oligopeptidase phomG to produce 10 identical copies of the hexapeptide Tyr-Val-Ile-Pro-Ile-Asp. After being excised from the precursor peptide, the core peptides are cyclized and modified post-translationally by enzymes encoded within the gene cluster. The timing and order of proteolysis of the phomA precursor and PTMs are still unknown. Two tyrosinase-like enzymes, phomQ1 and phomQ2, catalyze the chlorination and hydroxylation of Tyr, respectively. PhomYb, is proposed to be involved in the construction of the macrocyclic structure. The other 4 ustYa family proteins may be involved in PTMs that generate the unique structure of phomopsin A. PhomYa is required for the hydroxylation of C-beta of Tyr. PhomYc, phomYd, and phomYe are responsible for the biosynthesis of 2,3-dehydroisoleucine (dIle), 2,3-dehydroaspartic acid (dAsp), and 3,4-dehydroproline (dPro), respectively. While dIle formation by phomYc is indispensable for the installation of dAsp by phomYd, the order of the other PTMs have not been elucidated yet. Most of the biosynthetic enzymes likely have broad substrate specificity, and thus, there might be a metabolic grid from a precursor to phomopsin A. The enzyme(s) responsible for the biosynthesis of 3,4-dehydrovaline (dVal) have also not been identified yet. Finally, phomM acts as an S-adenosylmethionine-dependent alpha-N-methyltransferase that catalyzes two successive N-methylation reactions, converting N-desmethyl-phomopsin A to phomopsin A and phomopsin A further to an N,N-dimethylated congener called phomopsin E. This is Short-chain dehydrogenase/reductase PhomF' from Diaporthe leptostromiformis (Lupinosis disease fungus).